Reading from the N-terminus, the 417-residue chain is MSALMKTDPEIAEAIRLETRRQAGKLELIASENFVSEAVLEAQGCIMTNKYAEGYPGKRYYGGCEYVDIAENLAIERCKALFGADYVNVQPHSGTQANMAVYFSALSVGDTILGMNLAHGGHLSHGSPANFSGKFYNVVPYGVDRETETIDYNQVEDLALQHKPRMIVVGASAYPRTIDFEKFRAIADKVGALVMADIAHIAGLVATGLHPSPVPVCEYVTSTTHKTLRGPRGGLVMCQASYQKTLSSRVFPGVQGGPLMHIIAAKAVAFKEALTDEFKDYQSQIVKNAQALAKELIGRGYRLVSGGTDNHLLLMDLTDKGLTGKEAQESLDSAGITVNKNGIPFDTRGPMVTSGIRIGTPALTSRGMKEEEMRTIARLIAEVLEHRDNEKHLMAVKEEVGRLCQNFPLYAERIASA.

(6S)-5,6,7,8-tetrahydrofolate-binding positions include Leu-117 and 121–123 (GHL). Lys-226 is modified (N6-(pyridoxal phosphate)lysine).

The protein belongs to the SHMT family. In terms of assembly, homodimer. Pyridoxal 5'-phosphate serves as cofactor.

The protein resides in the cytoplasm. The catalysed reaction is (6R)-5,10-methylene-5,6,7,8-tetrahydrofolate + glycine + H2O = (6S)-5,6,7,8-tetrahydrofolate + L-serine. It functions in the pathway one-carbon metabolism; tetrahydrofolate interconversion. Its pathway is amino-acid biosynthesis; glycine biosynthesis; glycine from L-serine: step 1/1. Catalyzes the reversible interconversion of serine and glycine with tetrahydrofolate (THF) serving as the one-carbon carrier. This reaction serves as the major source of one-carbon groups required for the biosynthesis of purines, thymidylate, methionine, and other important biomolecules. Also exhibits THF-independent aldolase activity toward beta-hydroxyamino acids, producing glycine and aldehydes, via a retro-aldol mechanism. In Syntrophus aciditrophicus (strain SB), this protein is Serine hydroxymethyltransferase.